The sequence spans 194 residues: ATP-dependent Clp protease proteolytic subunit 1 (194 aa).

Residue serine 98 is the Nucleophile of the active site. Histidine 123 is a catalytic residue.

The protein belongs to the peptidase S14 family. Fourteen ClpP subunits assemble into 2 heptameric rings which stack back to back to give a disk-like structure with a central cavity, resembling the structure of eukaryotic proteasomes.

The protein resides in the cytoplasm. It carries out the reaction Hydrolysis of proteins to small peptides in the presence of ATP and magnesium. alpha-casein is the usual test substrate. In the absence of ATP, only oligopeptides shorter than five residues are hydrolyzed (such as succinyl-Leu-Tyr-|-NHMec, and Leu-Tyr-Leu-|-Tyr-Trp, in which cleavage of the -Tyr-|-Leu- and -Tyr-|-Trp bonds also occurs).. Cleaves peptides in various proteins in a process that requires ATP hydrolysis. Has a chymotrypsin-like activity. Plays a major role in the degradation of misfolded proteins. ClpXP1 is involved in the complete degradation of the Site-2 clipped anti-sigma-W factor RsiW. This results in the release of SigW and the transcription activation of the genes under the control of the sigma-W factor. The sequence is that of ATP-dependent Clp protease proteolytic subunit 1 from Halalkalibacterium halodurans (strain ATCC BAA-125 / DSM 18197 / FERM 7344 / JCM 9153 / C-125) (Bacillus halodurans).